A 274-amino-acid polypeptide reads, in one-letter code: Pantothenate synthetase (274 aa).

Residue 27 to 34 (MGALHKGH) coordinates ATP. H34 acts as the Proton donor in catalysis. Q58 contacts (R)-pantoate. Q58 serves as a coordination point for beta-alanine. An ATP-binding site is contributed by 145–148 (GQKD). Q151 is a binding site for (R)-pantoate. Residue 182–185 (LSSR) coordinates ATP.

Belongs to the pantothenate synthetase family. In terms of assembly, homodimer.

The protein resides in the cytoplasm. The enzyme catalyses (R)-pantoate + beta-alanine + ATP = (R)-pantothenate + AMP + diphosphate + H(+). It functions in the pathway cofactor biosynthesis; (R)-pantothenate biosynthesis; (R)-pantothenate from (R)-pantoate and beta-alanine: step 1/1. Functionally, catalyzes the condensation of pantoate with beta-alanine in an ATP-dependent reaction via a pantoyl-adenylate intermediate. In Wolinella succinogenes (strain ATCC 29543 / DSM 1740 / CCUG 13145 / JCM 31913 / LMG 7466 / NCTC 11488 / FDC 602W) (Vibrio succinogenes), this protein is Pantothenate synthetase.